The following is a 430-amino-acid chain: Glutamate-1-semialdehyde 2,1-aminomutase (430 aa).

K265 carries the N6-(pyridoxal phosphate)lysine modification.

The protein belongs to the class-III pyridoxal-phosphate-dependent aminotransferase family. HemL subfamily. As to quaternary structure, homodimer. It depends on pyridoxal 5'-phosphate as a cofactor.

The protein localises to the cytoplasm. The enzyme catalyses (S)-4-amino-5-oxopentanoate = 5-aminolevulinate. The protein operates within porphyrin-containing compound metabolism; protoporphyrin-IX biosynthesis; 5-aminolevulinate from L-glutamyl-tRNA(Glu): step 2/2. The protein is Glutamate-1-semialdehyde 2,1-aminomutase of Shewanella oneidensis (strain ATCC 700550 / JCM 31522 / CIP 106686 / LMG 19005 / NCIMB 14063 / MR-1).